Consider the following 140-residue polypeptide: Putative pre-16S rRNA nuclease (140 aa).

This sequence belongs to the YqgF nuclease family.

It is found in the cytoplasm. In terms of biological role, could be a nuclease involved in processing of the 5'-end of pre-16S rRNA. The protein is Putative pre-16S rRNA nuclease of Halothermothrix orenii (strain H 168 / OCM 544 / DSM 9562).